Reading from the N-terminus, the 1023-residue chain is Hemolysin, chromosomal (1023 aa).

3 consecutive transmembrane segments (helical) span residues 237–259 (IGAG…ILSN), 267–326 (KAAA…LSIA), and 364–410 (DASL…GILE). 2 N6-myristoyl lysine lipidation sites follow: lysine 563 and lysine 689. Hemolysin-type calcium-binding repeat units lie at residues 731-748 (FGSK…DDHI), 749-766 (EGND…NDTL), 767-784 (SGGN…NDKL), 785-802 (IGGA…DDEL), 815-832 (SGGK…ADLL), and 833-850 (DGGE…NDIY). Over residues 747–763 (HIEGNDGNDRLYGDKGN) the composition is skewed to basic and acidic residues. The segment at 747–780 (HIEGNDGNDRLYGDKGNDTLSGGNGDDQLYGGDG) is disordered.

This sequence belongs to the RTX prokaryotic toxin (TC 1.C.11) family. Post-translationally, myristoylated by HlyC; the toxin only becomes active when modified. Mainly myristoylated, while a minor fraction is acylated with pentadecanoyl (C15:0; 26%) and heptadecanoyl (C17:0; 6%) fatty acyl groups. Fatty acylation is involved in binding to host membranes and promotes the irreversible insertion of Hemolysin into the host cell membrane. Can be activated by both myristoylation and palmitoylation, but HlyC catalyzes lysine myristoylation.

It localises to the secreted. Its subcellular location is the host cell membrane. Functionally, bacterial hemolysins are exotoxins that attack blood cell membranes and cause cell rupture by forming a pore. The protein is Hemolysin, chromosomal of Escherichia coli.